The chain runs to 44 residues: Protein PsbN (44 aa).

Residues V7 to G29 traverse the membrane as a helical segment.

This sequence belongs to the PsbN family.

Its subcellular location is the plastid. It is found in the chloroplast thylakoid membrane. Its function is as follows. May play a role in photosystem I and II biogenesis. The chain is Protein PsbN from Nephroselmis olivacea (Green alga).